We begin with the raw amino-acid sequence, 623 residues long: Sterol O-acyltransferase 1 (623 aa).

Positions 20-99 are disordered; the sequence is NSAEPSKRHS…EQAEEKYPVD (80 aa). Positions 57–72 are enriched in low complexity; that stretch reads ATTTATGVAVAAAAAA. Residues 83–92 show a composition bias toward acidic residues; that stretch reads DGDDEQDEQA. Transmembrane regions (helical) follow at residues 195 to 215, 242 to 262, 277 to 297, 384 to 404, and 422 to 442; these read LESN…WIAF, LFTI…VVFV, GFVA…PVYV, ISCS…QINY, and IMGT…PVAM. The short motif at 504–510 is the FYXDWWN motif element; that stretch reads FYGDWWN. The next 2 membrane-spanning stretches (helical) occupy residues 548-568 and 603-623; these read ATLF…FAIF and VVFT…YLTL. His560 is an active-site residue.

It belongs to the membrane-bound acyltransferase family. Sterol o-acyltransferase subfamily.

It localises to the endoplasmic reticulum membrane. Its function is as follows. Sterol O-acyltransferase that catalyzes the formation of stery esters. The protein is Sterol O-acyltransferase 1 (ARE1) of Saccharomyces uvarum (strain ATCC 76518 / CBS 7001 / CLIB 283 / NBRC 10550 / MCYC 623 / NCYC 2669 / NRRL Y-11845) (Yeast).